The following is a 563-amino-acid chain: Src substrate protein p85 (563 aa).

Cortactin repeat units follow at residues 89–125, 126–162, 163–199, 200–236, 237–273, and 274–310; these read ASHGYGGKFGVEQDRMDKSAVGHEYQSKLSKHCSQVD, SVKGFGGKFGVQTDRVDQSAVGFEYQGKTEKHASQKD, YSSGFGGKYGVQADRVDKSAVGFDYQGKTEKHESQKD, YSKGFGGKYGVDKDKVDKSAVGFEYQGKTEKHESQKD, YVKGFGGKFGVQTDRQDKCALGWDHQEKVQLHESQKD, and YKSGFGGKFGVQTERQDPSAVGFDYKEKLAKHESQQD. Residues 311–333 form a Cortactin 7; truncated repeat; sequence YSKGFGGKYGVQKDRMDKNAATF. Residues 331 to 477 are disordered; that stretch reads ATFEDIEKPT…EAVSQREAEY (147 aa). Residues 349–410 adopt a coiled-coil conformation; sequence VERVANKTSS…EEQAKAKKQT (62 aa). Residues 366 to 405 are compositionally biased toward basic and acidic residues; sequence LAKEKEQEDRRKAEAERAQRMAREKQEQEEARRKLEEQAK. One can recognise an SH3 domain in the interval 505–563; the sequence is ELGITAIALYDYQAAGDDEISFDPDDIITNIEMIDDGWWRGVCKGRYGLFPANYVELRQ.

In terms of processing, acetylated. In normal cells, appears to be phosphorylated on serine and threonine; in cells expressing activated forms of pp60-src, they become heavily phosphorylated on tyrosine in vitro. Tyrosine phosphorylation in transformed cells may contribute to cellular growth regulation and transformation.

Its subcellular location is the cytoplasm. The protein resides in the cytoskeleton. It is found in the cell projection. The protein localises to the lamellipodium. It localises to the ruffle. Its subcellular location is the dendrite. The protein resides in the cell membrane. It is found in the podosome. The protein localises to the cell junction. It localises to the focal adhesion. Its subcellular location is the membrane. The protein resides in the clathrin-coated pit. It is found in the dendritic spine. The protein localises to the cell cortex. It localises to the endoplasmic reticulum. Its function is as follows. Contributes to the organization of the actin cytoskeleton and cell shape. Plays a role in the formation of lamellipodia and in cell migration. Plays a role in the regulation of neuron morphology, axon growth and formation of neuronal growth cones, and may play a role in the regulation of neuronal spine density. Plays a role in focal adhesion assembly and turnover. Plays a role in intracellular protein transport and endocytosis, and in modulating the levels of potassium channels present at the cell membrane. Plays a role in endocytosis via clathrin-coated pits. The protein is Src substrate protein p85 (CTTN1) of Gallus gallus (Chicken).